Consider the following 383-residue polypeptide: Succinyl-diaminopimelate desuccinylase (383 aa).

H72 serves as a coordination point for Zn(2+). D74 is an active-site residue. D105 contributes to the Zn(2+) binding site. E137 (proton acceptor) is an active-site residue. Zn(2+) contacts are provided by E138, E167, and H352.

The protein belongs to the peptidase M20A family. DapE subfamily. As to quaternary structure, homodimer. It depends on Zn(2+) as a cofactor. The cofactor is Co(2+).

It catalyses the reaction N-succinyl-(2S,6S)-2,6-diaminopimelate + H2O = (2S,6S)-2,6-diaminopimelate + succinate. The protein operates within amino-acid biosynthesis; L-lysine biosynthesis via DAP pathway; LL-2,6-diaminopimelate from (S)-tetrahydrodipicolinate (succinylase route): step 3/3. Catalyzes the hydrolysis of N-succinyl-L,L-diaminopimelic acid (SDAP), forming succinate and LL-2,6-diaminopimelate (DAP), an intermediate involved in the bacterial biosynthesis of lysine and meso-diaminopimelic acid, an essential component of bacterial cell walls. This Ehrlichia ruminantium (strain Welgevonden) protein is Succinyl-diaminopimelate desuccinylase.